The chain runs to 241 residues: Large ribosomal subunit protein uL30 (241 aa).

The interval 1-32 (MATTLKPETLQKKEKAQQKTAEERAAAKKVRK) is disordered. Residues 9 to 26 (TLQKKEKAQQKTAEERAA) are compositionally biased toward basic and acidic residues.

This sequence belongs to the universal ribosomal protein uL30 family. In terms of assembly, component of the large ribosomal subunit. Mature ribosomes consist of a small (40S) and a large (60S) subunit. The 40S subunit contains about 32 different proteins and 1 molecule of RNA (18S). The 60S subunit contains 45 different proteins and 3 molecules of RNA (25S, 5.8S and 5S).

Its subcellular location is the cytoplasm. In terms of biological role, component of the ribosome, a large ribonucleoprotein complex responsible for the synthesis of proteins in the cell. The small ribosomal subunit (SSU) binds messenger RNAs (mRNAs) and translates the encoded message by selecting cognate aminoacyl-transfer RNA (tRNA) molecules. The large subunit (LSU) contains the ribosomal catalytic site termed the peptidyl transferase center (PTC), which catalyzes the formation of peptide bonds, thereby polymerizing the amino acids delivered by tRNAs into a polypeptide chain. The nascent polypeptides leave the ribosome through a tunnel in the LSU and interact with protein factors that function in enzymatic processing, targeting, and the membrane insertion of nascent chains at the exit of the ribosomal tunnel. The protein is Large ribosomal subunit protein uL30 of Candida albicans (strain SC5314 / ATCC MYA-2876) (Yeast).